The chain runs to 544 residues: Propane 2-monooxygenase, hydroxylase component large subunit (544 aa).

Residues glutamate 97, glutamate 127, histidine 130, glutamate 192, glutamate 226, and histidine 229 each contribute to the Fe cation site.

The protein belongs to the TmoA/XamoA family. In terms of assembly, the propane 2-monooxygenase multicomponent enzyme system is composed of an electron transfer component and a monooxygenase component interacting with the effector protein PrmD. The electron transfer component is composed of a reductase (PrmB), and the monooxygenase component is formed by a large subunit (PrmA) and a small subunit (PrmC). Probably requires the presence of the chaperonin-like protein PrmG to ensure a productive folding, resulting of a soluble PrmA, which leads to the active form of PrmABCD. Fe(2+) is required as a cofactor.

The catalysed reaction is propane + NADH + O2 + H(+) = propan-2-ol + NAD(+) + H2O. Its function is as follows. Component of the propane 2-monooxygenase multicomponent enzyme system which is involved in the degradation of propane via the O2-dependent hydroxylation of propane. Also able to catalyze the oxidation the water contaminant N-nitrosodimethylamine (NDMA). This chain is Propane 2-monooxygenase, hydroxylase component large subunit, found in Rhodococcus jostii (strain RHA1).